Consider the following 239-residue polypeptide: Ribosomal RNA small subunit methyltransferase G (239 aa).

S-adenosyl-L-methionine-binding positions include Gly79, Phe84, 130 to 131 (AE), and Arg149.

The protein belongs to the methyltransferase superfamily. RNA methyltransferase RsmG family.

The protein resides in the cytoplasm. Functionally, specifically methylates the N7 position of a guanine in 16S rRNA. The polypeptide is Ribosomal RNA small subunit methyltransferase G (Lactobacillus delbrueckii subsp. bulgaricus (strain ATCC 11842 / DSM 20081 / BCRC 10696 / JCM 1002 / NBRC 13953 / NCIMB 11778 / NCTC 12712 / WDCM 00102 / Lb 14)).